The chain runs to 430 residues: Trigger factor (430 aa).

Residues 157–242 (GDLVALETWS…AVEVSEPVLP (86 aa)) enclose the PPIase FKBP-type domain.

The protein belongs to the FKBP-type PPIase family. Tig subfamily.

Its subcellular location is the cytoplasm. The catalysed reaction is [protein]-peptidylproline (omega=180) = [protein]-peptidylproline (omega=0). Involved in protein export. Acts as a chaperone by maintaining the newly synthesized protein in an open conformation. Functions as a peptidyl-prolyl cis-trans isomerase. The protein is Trigger factor of Xanthomonas euvesicatoria pv. vesicatoria (strain 85-10) (Xanthomonas campestris pv. vesicatoria).